Here is a 155-residue protein sequence, read N- to C-terminus: Protein SREK1IP1 (155 aa).

Residues 13–30 form a CCHC-type zinc finger; it reads AGCKKCGYPGHLTFECRN. The segment at 44-155 is disordered; it reads VSSTSSEDSD…TPNSSEFSRK (112 aa). Serine 52 carries the phosphoserine modification. Residues 66-84 are compositionally biased toward basic and acidic residues; it reads QEKRINEEEEKKKEKSKEK. Residues 85 to 94 show a composition bias toward basic residues; sequence IKLKKKRKRS. Residues serine 96 and serine 97 each carry the phosphoserine modification. A compositionally biased stretch (basic residues) spans 107–142; sequence QKKQKYQKKEKKKEKKSKSKKGKHHKKEKKKRKKEK. Threonine 146 carries the post-translational modification Phosphothreonine. Polar residues predominate over residues 146–155; it reads TPNSSEFSRK.

Interacts with SREK1/SFRS12.

Functionally, possible splicing regulator involved in the control of cellular survival. This is Protein SREK1IP1 (SREK1IP1) from Homo sapiens (Human).